The sequence spans 455 residues: uncharacterized protein (455 aa).

This is an uncharacterized protein from Acanthamoeba polyphaga (Amoeba).